The chain runs to 380 residues: Glutamate 5-kinase (380 aa).

Lysine 15 is a binding site for ATP. The substrate site is built by serine 59, aspartate 146, and asparagine 158. Residue 178–179 coordinates ATP; sequence TD. Positions 285–363 constitute a PUA domain; the sequence is RGSVTVDAGA…AEFERLLGYA (79 aa).

The protein belongs to the glutamate 5-kinase family.

It localises to the cytoplasm. The enzyme catalyses L-glutamate + ATP = L-glutamyl 5-phosphate + ADP. It participates in amino-acid biosynthesis; L-proline biosynthesis; L-glutamate 5-semialdehyde from L-glutamate: step 1/2. In terms of biological role, catalyzes the transfer of a phosphate group to glutamate to form L-glutamate 5-phosphate. This is Glutamate 5-kinase from Acidovorax ebreus (strain TPSY) (Diaphorobacter sp. (strain TPSY)).